A 767-amino-acid polypeptide reads, in one-letter code: DNA topoisomerase 1 (767 aa).

A compositionally biased stretch (basic and acidic residues) spans 1 to 23; the sequence is MSGDHLHNDSQIEADFRLNDSHK. The interval 1 to 201 is disordered; it reads MSGDHLHNDS…NKKKKPKKEE (201 aa). N-acetylserine is present on Ser-2. Phosphoserine occurs at positions 2 and 10. Over residues 24-39 the composition is skewed to basic residues; it reads HKDKHKDREHRHKEHK. The span at 40–110 shows a compositional bias: basic and acidic residues; the sequence is KDKEKDREKS…DAKIKKEKEN (71 aa). A Phosphoserine modification is found at Ser-59. Lys-103 is covalently cross-linked (Glycyl lysine isopeptide (Lys-Gly) (interchain with G-Cter in SUMO2)). Lys-105 is covalently cross-linked (Glycyl lysine isopeptide (Lys-Gly) (interchain with G-Cter in SUMO); alternate). Lys-105 participates in a covalent cross-link: Glycyl lysine isopeptide (Lys-Gly) (interchain with G-Cter in SUMO2); alternate. A Phosphoserine modification is found at Ser-114. Lys-119 is covalently cross-linked (Glycyl lysine isopeptide (Lys-Gly) (interchain with G-Cter in SUMO); alternate). Lys-119 participates in a covalent cross-link: Glycyl lysine isopeptide (Lys-Gly) (interchain with G-Cter in SUMO2); alternate. Lys-119 participates in a covalent cross-link: Glycyl lysine isopeptide (Lys-Gly) (interchain with G-Cter in SUMO1); alternate. The segment covering 131-168 has biased composition (basic and acidic residues); the sequence is PKEDIKPLKRPRDEDDADYKPKKIKTEDIKKEKKRKLE. Glycyl lysine isopeptide (Lys-Gly) (interchain with G-Cter in SUMO2) cross-links involve residues Lys-136 and Lys-150. Lys-155 is covalently cross-linked (Glycyl lysine isopeptide (Lys-Gly) (interchain with G-Cter in SUMO); alternate). A Glycyl lysine isopeptide (Lys-Gly) (interchain with G-Cter in SUMO2); alternate cross-link involves residue Lys-155. Residues Lys-160 and Lys-166 each participate in a glycyl lysine isopeptide (Lys-Gly) (interchain with G-Cter in SUMO2) cross-link. A Glycyl lysine isopeptide (Lys-Gly) (interchain with G-Cter in SUMO2); alternate cross-link involves residue Lys-174. Lys-174 carries the N6-acetyllysine; alternate modification. Basic and acidic residues predominate over residues 181–201; sequence KDKDKKVPEPDNKKKKPKKEE. Lys-206 participates in a covalent cross-link: Glycyl lysine isopeptide (Lys-Gly) (interchain with G-Cter in SUMO2). Position 282 is an N6-acetyllysine (Lys-282). Residue Lys-338 forms a Glycyl lysine isopeptide (Lys-Gly) (interchain with G-Cter in SUMO2) linkage. Interaction with DNA stretches follow at residues 427-428 and 490-495; these read KY and RAGNEK. The Topo IB-type catalytic domain occupies 434–767; that stretch reads SSRIKGEKDW…IDMADEDYEF (334 aa). Position 508 is a phosphoserine; by CK2 (Ser-508). Residue Lys-551 forms a Glycyl lysine isopeptide (Lys-Gly) (interchain with G-Cter in SUMO2) linkage. Positions 587-589 are interaction with DNA; sequence TAK. Residues Lys-644, Lys-702, and Lys-714 each participate in a glycyl lysine isopeptide (Lys-Gly) (interchain with G-Cter in SUMO2) cross-link. The active-site O-(3'-phospho-DNA)-tyrosine intermediate is Tyr-725.

Belongs to the type IB topoisomerase family. In terms of assembly, monomer. Interacts with ERCC6. Interacts with TPRN; TPRN interacts with a number of DNA damage response proteins, is recruited to sites of DNA damage and may play a role in DNA damage repair. Post-translationally, sumoylated. Lys-119 is the main site of sumoylation. Sumoylation plays a role in partitioning TOP1 between nucleoli and nucleoplasm. Levels are dramatically increased on camptothecin (CPT) treatment. Phosphorylation at Ser-508 by CK2 increases binding to supercoiled DNA and sensitivity to camptothecin.

Its subcellular location is the nucleus. It is found in the nucleolus. It localises to the nucleoplasm. The catalysed reaction is ATP-independent breakage of single-stranded DNA, followed by passage and rejoining.. Specifically inhibited by camptothecin (CPT), a plant alkaloid with antitumor activity. Its function is as follows. Releases the supercoiling and torsional tension of DNA introduced during the DNA replication and transcription by transiently cleaving and rejoining one strand of the DNA duplex. Introduces a single-strand break via transesterification at a target site in duplex DNA. The scissile phosphodiester is attacked by the catalytic tyrosine of the enzyme, resulting in the formation of a DNA-(3'-phosphotyrosyl)-enzyme intermediate and the expulsion of a 5'-OH DNA strand. The free DNA strand then rotates around the intact phosphodiester bond on the opposing strand, thus removing DNA supercoils. Finally, in the religation step, the DNA 5'-OH attacks the covalent intermediate to expel the active-site tyrosine and restore the DNA phosphodiester backbone. Regulates the alternative splicing of tissue factor (F3) pre-mRNA in endothelial cells. Involved in the circadian transcription of the core circadian clock component BMAL1 by altering the chromatin structure around the ROR response elements (ROREs) on the BMAL1 promoter. In Chlorocebus aethiops (Green monkey), this protein is DNA topoisomerase 1 (TOP1).